Here is an 80-residue protein sequence, read N- to C-terminus: UPF0180 protein GK1051 (80 aa).

It belongs to the UPF0180 family.

The protein is UPF0180 protein GK1051 of Geobacillus kaustophilus (strain HTA426).